We begin with the raw amino-acid sequence, 765 residues long: Cullin-5 (765 aa).

A Cullin neddylation domain is found at 696-757 (RELRVQEGIV…NKYMERRADD (62 aa)). Lysine 709 is covalently cross-linked (Glycyl lysine isopeptide (Lys-Gly) (interchain with G-Cter in NEDD8)).

It belongs to the cullin family. Interacts with rbx-1 and rbx-2. Post-translationally, neddylated; which enhances the ubiquitination activity of SCF-like complex.

It functions in the pathway protein modification; protein ubiquitination. Probable core component of cullin-based SCF-like E3 ubiquitin-protein ligase complexes which mediate the ubiquitination and subsequent proteasomal degradation of target proteins. In association with rbx-2 seems to be involved in meiotic cell cycle progression in the germline. Required for phosphorylation of the MAP kinase MPK-1 in the germline. The protein is Cullin-5 (cul-5) of Caenorhabditis elegans.